The primary structure comprises 187 residues: Hypoxanthine/guanine phosphoribosyltransferase (187 aa).

It belongs to the purine/pyrimidine phosphoribosyltransferase family. Archaeal HPRT subfamily. In terms of assembly, homodimer.

Its subcellular location is the cytoplasm. The catalysed reaction is IMP + diphosphate = hypoxanthine + 5-phospho-alpha-D-ribose 1-diphosphate. It catalyses the reaction GMP + diphosphate = guanine + 5-phospho-alpha-D-ribose 1-diphosphate. Its pathway is purine metabolism; IMP biosynthesis via salvage pathway; IMP from hypoxanthine: step 1/1. Its function is as follows. Catalyzes a salvage reaction resulting in the formation of IMP that is energically less costly than de novo synthesis. This chain is Hypoxanthine/guanine phosphoribosyltransferase, found in Methanopyrus kandleri (strain AV19 / DSM 6324 / JCM 9639 / NBRC 100938).